A 976-amino-acid chain; its full sequence is Ephrin type-A receptor 1 (976 aa).

The N-terminal stretch at 1–25 (MERRWPLGLGLVLLLCAPLPPGARA) is a signal peptide. The Extracellular segment spans residues 26-547 (KEVTLMDTSK…PVSRGLTGGE (522 aa)). One can recognise an Eph LBD domain in the interval 27 to 209 (EVTLMDTSKA…FYQRCPETLN (183 aa)). 2 Fibronectin type-III domains span residues 332-445 (PPSA…MGHA) and 447-538 (SLSG…TSPP). Residue Asn-414 is glycosylated (N-linked (GlcNAc...) asparagine). A helical membrane pass occupies residues 548–568 (IVAVIFGLLLGAALLLGILVF). The Cytoplasmic segment spans residues 569 to 976 (RSRRAQRQRQ…ILCSIQGFKD (408 aa)). Phosphotyrosine; by autocatalysis is present on residues Tyr-599 and Tyr-605. One can recognise a Protein kinase domain in the interval 624 to 884 (LMVDTVIGEG…KLQAHLEQLL (261 aa)). ATP-binding positions include 630 to 638 (IGEGEFGEV) and Lys-656. The active-site Proton acceptor is Asp-749. Position 781 is a phosphotyrosine; by autocatalysis (Tyr-781). 2 positions are modified to phosphoserine: Ser-906 and Ser-910. Residues 913 to 976 (IPYRTVSEWL…ILCSIQGFKD (64 aa)) form the SAM domain. Tyr-930 carries the phosphotyrosine; by autocatalysis modification. The short motif at 974-976 (FKD) is the PDZ-binding element.

This sequence belongs to the protein kinase superfamily. Tyr protein kinase family. Ephrin receptor subfamily. As to quaternary structure, homodimer. Forms a signaling complex with LCK; PTK2B/PYK2 and PI3-kinase upon activation by EFNA1; regulates T-lymphocytes migration. Interacts (via SAM domain) with ILK (via ANK repeats); stimulated by EFNA1 but independent of the kinase activity of EPHA1. Interacts (kinase activity-dependent) with PTK2/FAK1. Phosphorylated. Autophosphorylation is stimulated by its ligand EFNA1. In terms of processing, ubiquitinated. As to expression, overexpressed in several carcinomas.

The protein resides in the cell membrane. It catalyses the reaction L-tyrosyl-[protein] + ATP = O-phospho-L-tyrosyl-[protein] + ADP + H(+). Functionally, receptor tyrosine kinase which binds promiscuously membrane-bound ephrin-A family ligands residing on adjacent cells, leading to contact-dependent bidirectional signaling into neighboring cells. The signaling pathway downstream of the receptor is referred to as forward signaling while the signaling pathway downstream of the ephrin ligand is referred to as reverse signaling. Binds with a low affinity EFNA3 and EFNA4 and with a high affinity to EFNA1 which most probably constitutes its cognate/functional ligand. Upon activation by EFNA1 induces cell attachment to the extracellular matrix inhibiting cell spreading and motility through regulation of ILK and downstream RHOA and RAC. Also plays a role in angiogenesis and regulates cell proliferation. May play a role in apoptosis. This chain is Ephrin type-A receptor 1 (EPHA1), found in Homo sapiens (Human).